Here is a 147-residue protein sequence, read N- to C-terminus: Small ribosomal subunit protein bS6 (147 aa).

The segment at 103-147 is disordered; it reads AARMAANLPSFPEDEDTEEKGSAPLAREEEGIGEEAQTDEAEDKE. The segment covering 133–147 has biased composition (acidic residues); it reads GIGEEAQTDEAEDKE.

The protein belongs to the bacterial ribosomal protein bS6 family.

Functionally, binds together with bS18 to 16S ribosomal RNA. The chain is Small ribosomal subunit protein bS6 from Syntrophobacter fumaroxidans (strain DSM 10017 / MPOB).